Consider the following 424-residue polypeptide: Histidinol dehydrogenase (424 aa).

Positions 121, 183, and 206 each coordinate NAD(+). The substrate site is built by Ser229, Gln251, and His254. Positions 251 and 254 each coordinate Zn(2+). Catalysis depends on proton acceptor residues Glu319 and His320. 4 residues coordinate substrate: His320, Asp353, Glu407, and His412. Asp353 is a binding site for Zn(2+). Residue His412 participates in Zn(2+) binding.

This sequence belongs to the histidinol dehydrogenase family. Requires Zn(2+) as cofactor.

It carries out the reaction L-histidinol + 2 NAD(+) + H2O = L-histidine + 2 NADH + 3 H(+). Its pathway is amino-acid biosynthesis; L-histidine biosynthesis; L-histidine from 5-phospho-alpha-D-ribose 1-diphosphate: step 9/9. Catalyzes the sequential NAD-dependent oxidations of L-histidinol to L-histidinaldehyde and then to L-histidine. The chain is Histidinol dehydrogenase from Halalkalibacterium halodurans (strain ATCC BAA-125 / DSM 18197 / FERM 7344 / JCM 9153 / C-125) (Bacillus halodurans).